Reading from the N-terminus, the 230-residue chain is uncharacterized protein (230 aa).

Positions 1–57 (MPGPHSPNPGVGTNGPAPYPEPSSHEPQALDYPHDLGAAEPAFAPGPADDAALPPAA) are disordered. Over residues 38 to 55 (AAEPAFAPGPADDAALPP) the composition is skewed to low complexity. Residues 75-95 (LLIGIVVALALVSAMTAAIIY) traverse the membrane as a helical segment.

Its subcellular location is the membrane. This is an uncharacterized protein from Mycobacterium tuberculosis (strain CDC 1551 / Oshkosh).